Reading from the N-terminus, the 145-residue chain is Brain and acute leukemia cytoplasmic protein (145 aa).

G2 carries the N-myristoyl glycine lipid modification. A lipid anchor (S-palmitoyl cysteine) is attached at C3. The interval 3–35 (CGGSRADAIEPRYYESWTRETESTWLTYTDSDA) is interaction with CAMK2A. A disordered region spans residues 27–119 (WLTYTDSDAP…AKRDAKRMPA (93 aa)). A compositionally biased stretch (low complexity) spans 32–46 (DSDAPPSAAAPDSGP). Residues 83–108 (CETQCPNPQSLSSGPLTQKQNGLQTT) are compositionally biased toward polar residues. The segment covering 109-119 (EAKRDAKRMPA) has biased composition (basic and acidic residues).

In terms of assembly, interacts with CAMK2A. Post-translationally, palmitoylation and myristoylation target the protein to the lipid rafts. As to expression, predominantly expressed in neuroectoderm-derived tissues. Expressed in the brain and spinal cord, and at low levels, in the adrenal gland. In the bone marrow, confined to the CD34+ progenitor cells. Not found in peripheral blood mononuclear cells, nor lymph nodes. Tends to be expressed at high levels in acute myeloid leukemia and glioblastoma cells.

It is found in the cytoplasm. It localises to the synapse. The protein resides in the synaptosome. Its subcellular location is the membrane raft. The protein localises to the postsynaptic density. Functionally, may play a synaptic role at the postsynaptic lipid rafts possibly through interaction with CAMK2A. This Homo sapiens (Human) protein is Brain and acute leukemia cytoplasmic protein.